Here is a 219-residue protein sequence, read N- to C-terminus: Small ribosomal subunit protein uS19 (219 aa).

Positions 1–128 are unknown; sequence MGFKGAWNKR…YEEIYAQYKQ (128 aa). Residues 129–219 are small ribosomal subunit protein uS19; sequence MTEKKAYVDP…DKTAKVVKKK (91 aa).

This sequence belongs to the universal ribosomal protein uS19 family.

Protein S19 forms a complex with S13 that binds strongly to the 16S ribosomal RNA. The polypeptide is Small ribosomal subunit protein uS19 (Aquifex pyrophilus).